The following is a 255-amino-acid chain: Small ribosomal subunit protein eS1 (255 aa).

Residues 1–18 (MAVGKNKRLSKGKKGLKK) are compositionally biased toward basic residues. The disordered stretch occupies residues 1–20 (MAVGKNKRLSKGKKGLKKRV). Alanine 2 is subject to N-acetylalanine; partial.

This sequence belongs to the eukaryotic ribosomal protein eS1 family. In terms of assembly, component of the small ribosomal subunit. Mature ribosomes consist of a small (40S) and a large (60S) subunit. The 40S subunit contains about 33 different proteins and 1 molecule of RNA (18S). The 60S subunit contains about 49 different proteins and 3 molecules of RNA (25S, 5.8S and 5S).

It is found in the cytoplasm. This Coccidioides immitis (strain RS) (Valley fever fungus) protein is Small ribosomal subunit protein eS1.